Here is a 423-residue protein sequence, read N- to C-terminus: Phytoene synthase, chloroplastic (423 aa).

Residues 1–136 (MVVAILRVVS…DAYDRCGEVC (136 aa)) constitute a chloroplast transit peptide.

This sequence belongs to the phytoene/squalene synthase family. In terms of assembly, monomer.

The protein resides in the plastid. The protein localises to the chloroplast. The enzyme catalyses 2 (2E,6E,10E)-geranylgeranyl diphosphate = 15-cis-phytoene + 2 diphosphate. It participates in carotenoid biosynthesis; phytoene biosynthesis; all-trans-phytoene from geranylgeranyl diphosphate: step 1/1. In terms of biological role, catalyzes the reaction from prephytoene diphosphate to phytoene. This chain is Phytoene synthase, chloroplastic (PSY), found in Narcissus pseudonarcissus (Daffodil).